A 484-amino-acid chain; its full sequence is Neuronal acetylcholine receptor subunit alpha-9 (484 aa).

The first 27 residues, 1–27, serve as a signal peptide directing secretion; it reads MKRNNLSSFYVSLWLLFTATMLQAVES. Over 28 to 240 the chain is Extracellular; it reads AKGKYAQMLF…FTLILKRKSS (213 aa). An N-linked (GlcNAc...) asparagine glycan is attached at N59. The cysteines at positions 157 and 171 are disulfide-linked. Residue N172 is glycosylated (N-linked (GlcNAc...) asparagine). S193 and D195 together coordinate Na(+). C221 and C222 are joined by a disulfide. A run of 3 helical transmembrane segments spans residues 241-261, 271-291, and 305-325; these read FYIF…PLGF, VSLG…VAEI, and YIAT…IMNV. At 326-462 the chain is on the cytoplasmic side; sequence HHCGSEAKPV…WKKVAKVMDR (137 aa). Residues 364–395 are disordered; it reads RREKEQEHRLEGGDMCRGGDGKSHLSSRNDDS. A helical transmembrane segment spans residues 463 to 483; it reads FFMWIFFIMVFFMSVLIIGKA.

It belongs to the ligand-gated ion channel (TC 1.A.9) family. Acetylcholine receptor (TC 1.A.9.1) subfamily. Alpha-9/CHRNA9 sub-subfamily. As to quaternary structure, forms homo- or heteropentameric channels in conjunction with CHRNA10. The native outer hair cell receptor is composed of CHRNA9:CHRNA10 heterooligomers. Found in the stoichiometric form (CHRNA9)2:(CHRNA10)3. In terms of tissue distribution, expressed in hair cells of the cochlea (at protein level). Expressed in hair cells of the cochlea.

Its subcellular location is the synaptic cell membrane. It localises to the cell membrane. The enzyme catalyses Ca(2+)(in) = Ca(2+)(out). The catalysed reaction is K(+)(in) = K(+)(out). It carries out the reaction Na(+)(in) = Na(+)(out). It catalyses the reaction Mg(2+)(in) = Mg(2+)(out). With respect to regulation, activated by a myriad of ligands such as acetylcholine. AChR activity is inhibited by the antagonist alpha-conotoxins RgIA and GeXXA, small disulfide-constrained peptides from cone snails. Functionally, component of neuronal acetylcholine receptors (nAChRs) that function as pentameric, ligand-gated cation channels with high calcium permeability among other activities. nAChRs are excitatory neurotrasnmitter receptors formed by a collection of nAChR subunits known to mediate synaptic transmission in the nervous system and the neuromuscular junction. Each nAchR subunit confers differential attributes to channel properties, including activation, deactivation and desensitization kinetics, pH sensitivity, cation permeability, and binding to allosteric modulators. Forms either homopentamers or heteropentamers with CHRNA10. Expressed in the inner ear, in sympathetic neurons and in other non-neuronal cells, such as skin keratinocytes and lymphocytes. The channel is permeable to a range of divalent cations including calcium, the influx of which may activate a potassium current which hyperpolarizes the cell membrane. This is Neuronal acetylcholine receptor subunit alpha-9 (CHRNA9) from Gallus gallus (Chicken).